The sequence spans 490 residues: Probable cytochrome P450 518B1 (490 aa).

The chain crosses the membrane as a helical span at residues L2–F22. C437 contributes to the heme binding site.

The protein belongs to the cytochrome P450 family. Heme serves as cofactor.

Its subcellular location is the membrane. The sequence is that of Probable cytochrome P450 518B1 (cyp518B1) from Dictyostelium discoideum (Social amoeba).